Reading from the N-terminus, the 667-residue chain is DNA ligase (667 aa).

Residues 32–36 (DSEYD), 81–82 (SL), and E110 each bind NAD(+). The N6-AMP-lysine intermediate role is filled by K112. Residues R133, E167, K283, and K307 each coordinate NAD(+). Residues C401, C404, C419, and C424 each coordinate Zn(2+). Residues 586–667 (EGHPDFKDKT…FVQKQNEIEG (82 aa)) form the BRCT domain.

The protein belongs to the NAD-dependent DNA ligase family. LigA subfamily. It depends on Mg(2+) as a cofactor. The cofactor is Mn(2+).

The catalysed reaction is NAD(+) + (deoxyribonucleotide)n-3'-hydroxyl + 5'-phospho-(deoxyribonucleotide)m = (deoxyribonucleotide)n+m + AMP + beta-nicotinamide D-nucleotide.. Functionally, DNA ligase that catalyzes the formation of phosphodiester linkages between 5'-phosphoryl and 3'-hydroxyl groups in double-stranded DNA using NAD as a coenzyme and as the energy source for the reaction. It is essential for DNA replication and repair of damaged DNA. The chain is DNA ligase from Staphylococcus saprophyticus subsp. saprophyticus (strain ATCC 15305 / DSM 20229 / NCIMB 8711 / NCTC 7292 / S-41).